Consider the following 881-residue polypeptide: MSVRVRLAPSPTGNLHIGTARTAVFNWLFARNQKGKFILRIEDTDQERSRPEYTDNILEGLSWLGLEWDEGPFYQCQRYELYQKATQSLLDKGLAYRCYCTAAELEEMREAQKARKEAPRYDNRHRNLTDLEKKAFEAEGRQAVIRFRIDDDQIITWNDMVRGKVTWKGSDLGGDMVISRAAGGDEVGQPLYNMAVVVDDMDMEITHVIRGEDHIANTAKQILLYEALGGKIPEFGHTPLILNKEGRKLSKRDGVTSISDFQELGFTPEALANYMCLLGWTPPDATEEIFTLAQAGQNFSFERVNKAGAKFDWDKLDWISSQYLHNLPVKQLTDKLIPIWQKAGYELDPEGDRSWLEQLVTLIRPSLTRLTDAVEMSELFFFPTVELNEDAKTQMQNEDSVKSINSILEIINADAPLLVADVKQTIKKVTQKVHVKKGVVMRSLRASLTGAMQGPDLIESWLLLHQKGFDILRFKKSIGQEIEDTKIEDTKKAETTPHKSKGEGNVLLKTTTPKSPALSKEQTQTTKPPKKGQTATPVATTPTATDVTENTSVGTQETQSQITTPVATTPTATDVTENTSVGTQETQSQITTPVATTPTATDVTENTSVETQETQSQITTPVATTPTATDVTENTSVETQETQSQITTPVATTPTATDVTENTSVGTQETQSQITTPVATTPTATDVTENTSVETQETQSQITTPVATTSTATDVTENTSVETQETQSQITTPVATTPTATDAETREQKVATQVETSILDDQKPVDTVTNQTVEVEQPNKIKEQFINIFFNFPDYINQLYQQYQGQLKLFGWLALVILTFTFMAVVIEALDGIPILSIIFELIGVIYLVWFVYRYLLKRSNRQELLDKIENIKREIFGKPS.

The glutamyl-tRNA synthetase stretch occupies residues 1 to 480; it reads MSVRVRLAPS…ILRFKKSIGQ (480 aa). The 'HIGH' region motif lies at 9 to 19; it reads PSPTGNLHIGT. A 'KMSKS' region motif is present at residues 248 to 252; sequence KLSKR. Residue K251 participates in ATP binding. The segment at 481-881 is unknown; sequence EIEDTKIEDT…IKREIFGKPS (401 aa). Residues 488 to 502 show a composition bias toward basic and acidic residues; the sequence is EDTKKAETTPHKSKG. The segment at 488 to 747 is disordered; the sequence is EDTKKAETTP…PTATDAETRE (260 aa). Low complexity predominate over residues 522 to 548; sequence QTQTTKPPKKGQTATPVATTPTATDVT. The span at 549-562 shows a compositional bias: polar residues; it reads ENTSVGTQETQSQI. The span at 563 to 576 shows a compositional bias: low complexity; that stretch reads TTPVATTPTATDVT. Polar residues predominate over residues 577 to 590; sequence ENTSVGTQETQSQI. Over residues 591 to 604 the composition is skewed to low complexity; the sequence is TTPVATTPTATDVT. Residues 605 to 618 show a composition bias toward polar residues; sequence ENTSVETQETQSQI. Over residues 619 to 632 the composition is skewed to low complexity; that stretch reads TTPVATTPTATDVT. Over residues 633 to 646 the composition is skewed to polar residues; that stretch reads ENTSVETQETQSQI. Over residues 647 to 660 the composition is skewed to low complexity; it reads TTPVATTPTATDVT. The span at 661–674 shows a compositional bias: polar residues; it reads ENTSVGTQETQSQI. The segment covering 675–688 has biased composition (low complexity); that stretch reads TTPVATTPTATDVT. Residues 689–702 show a composition bias toward polar residues; the sequence is ENTSVETQETQSQI. Residues 703–720 show a composition bias toward low complexity; sequence TTPVATTSTATDVTENTS. A compositionally biased stretch (polar residues) spans 721–730; that stretch reads VETQETQSQI. The span at 731 to 742 shows a compositional bias: low complexity; that stretch reads TTPVATTPTATD. Helical transmembrane passes span 809 to 829 and 832 to 852; these read LFGW…VIEA and GIPI…VWFV.

The protein belongs to the class-I aminoacyl-tRNA synthetase family. Glutamate--tRNA ligase type 1 subfamily. As to quaternary structure, monomer.

It is found in the cytoplasm. The protein localises to the cell membrane. The enzyme catalyses tRNA(Glu) + L-glutamate + ATP = L-glutamyl-tRNA(Glu) + AMP + diphosphate. Catalyzes the attachment of glutamate to tRNA(Glu) in a two-step reaction: glutamate is first activated by ATP to form Glu-AMP and then transferred to the acceptor end of tRNA(Glu). This is Glutamate--tRNA ligase (gltX) from Trichodesmium erythraeum (strain IMS101).